The sequence spans 108 residues: DNA-binding protein HBbu (108 aa).

The protein belongs to the bacterial histone-like protein family.

In terms of biological role, histone-like DNA-binding protein which is capable of wrapping DNA to stabilize it, and thus to prevent its denaturation under extreme environmental conditions. The chain is DNA-binding protein HBbu (hbb) from Borrelia garinii subsp. bavariensis (strain ATCC BAA-2496 / DSM 23469 / PBi) (Borreliella bavariensis).